Reading from the N-terminus, the 143-residue chain is FAM161 homolog famh-136 (143 aa).

Belongs to the FAM136 family.

The protein localises to the cytoplasm. In terms of biological role, may play a role in locomotion and behavior. The protein is FAM161 homolog famh-136 of Caenorhabditis elegans.